The following is a 429-amino-acid chain: Ribosomal RNA small subunit methyltransferase B (429 aa).

Residues 254-260 (CAAPGGK), Asp277, Asp303, and Asp322 each bind S-adenosyl-L-methionine. Cys375 acts as the Nucleophile in catalysis.

The protein belongs to the class I-like SAM-binding methyltransferase superfamily. RsmB/NOP family.

It localises to the cytoplasm. It catalyses the reaction cytidine(967) in 16S rRNA + S-adenosyl-L-methionine = 5-methylcytidine(967) in 16S rRNA + S-adenosyl-L-homocysteine + H(+). Its function is as follows. Specifically methylates the cytosine at position 967 (m5C967) of 16S rRNA. The polypeptide is Ribosomal RNA small subunit methyltransferase B (Escherichia coli O7:K1 (strain IAI39 / ExPEC)).